Reading from the N-terminus, the 82-residue chain is MAKSVNATGFITYMVIFLILTGISRVKAKKPPCLEGRTAYVSPGPCSNSLCTQDCRPAGYHTGKCKVEWSTPICKCYGCRKV.

Residues 1-28 (MAKSVNATGFITYMVIFLILTGISRVKA) form the signal peptide. Disulfide bonds link cysteine 33-cysteine 79, cysteine 46-cysteine 65, cysteine 51-cysteine 74, and cysteine 55-cysteine 76.

This sequence belongs to the DEFL family.

It localises to the secreted. The sequence is that of Putative defensin-like protein 191 from Arabidopsis thaliana (Mouse-ear cress).